Reading from the N-terminus, the 717-residue chain is Fatty acid oxidation complex subunit alpha (717 aa).

The segment at 1–190 is enoyl-CoA hydratase; sequence MESTSAFNLQ…KAGLVDDVVP (190 aa). A 3-hydroxyacyl-CoA dehydrogenase region spans residues 306-717; that stretch reads RALHSVGVLG…AGNLQAEMTV (412 aa).

This sequence in the N-terminal section; belongs to the enoyl-CoA hydratase/isomerase family. The protein in the central section; belongs to the 3-hydroxyacyl-CoA dehydrogenase family. In terms of assembly, heterotetramer of two alpha chains (FadJ) and two beta chains (FadI).

The protein localises to the cytoplasm. It carries out the reaction a (3S)-3-hydroxyacyl-CoA = a (2E)-enoyl-CoA + H2O. The catalysed reaction is a 4-saturated-(3S)-3-hydroxyacyl-CoA = a (3E)-enoyl-CoA + H2O. The enzyme catalyses a (3S)-3-hydroxyacyl-CoA + NAD(+) = a 3-oxoacyl-CoA + NADH + H(+). It catalyses the reaction (3S)-3-hydroxybutanoyl-CoA = (3R)-3-hydroxybutanoyl-CoA. Its pathway is lipid metabolism; fatty acid beta-oxidation. Functionally, catalyzes the formation of a hydroxyacyl-CoA by addition of water on enoyl-CoA. Also exhibits 3-hydroxyacyl-CoA epimerase and 3-hydroxyacyl-CoA dehydrogenase activities. This is Fatty acid oxidation complex subunit alpha from Cronobacter sakazakii (strain ATCC BAA-894) (Enterobacter sakazakii).